The chain runs to 178 residues: ATP-dependent protease subunit HslV (178 aa).

Residue Thr-7 is part of the active site. Positions 162, 165, and 168 each coordinate Na(+).

It belongs to the peptidase T1B family. HslV subfamily. In terms of assembly, a double ring-shaped homohexamer of HslV is capped on each side by a ring-shaped HslU homohexamer. The assembly of the HslU/HslV complex is dependent on binding of ATP.

It localises to the cytoplasm. The catalysed reaction is ATP-dependent cleavage of peptide bonds with broad specificity.. Allosterically activated by HslU binding. Functionally, protease subunit of a proteasome-like degradation complex believed to be a general protein degrading machinery. The sequence is that of ATP-dependent protease subunit HslV from Dechloromonas aromatica (strain RCB).